The primary structure comprises 78 residues: Large ribosomal subunit protein bL28 (78 aa).

This sequence belongs to the bacterial ribosomal protein bL28 family.

The chain is Large ribosomal subunit protein bL28 from Corynebacterium aurimucosum (strain ATCC 700975 / DSM 44827 / CIP 107346 / CN-1) (Corynebacterium nigricans).